The following is a 407-amino-acid chain: Serine/threonine transporter SstT (407 aa).

The next 9 helical transmembrane spans lie at 11–31 (IIHG…VILA), 43–63 (FLGD…VFVL), 82–102 (IISL…LLSF), 141–161 (ALMT…GIAL), 192–212 (LGIF…ALAG), 216–236 (LLMV…PLIV), 298–318 (MGGA…TLGV), 339–359 (ASGV…LFGI), and 363–383 (IAMQ…SAET).

The protein belongs to the dicarboxylate/amino acid:cation symporter (DAACS) (TC 2.A.23) family.

The protein resides in the cell inner membrane. The catalysed reaction is L-serine(in) + Na(+)(in) = L-serine(out) + Na(+)(out). The enzyme catalyses L-threonine(in) + Na(+)(in) = L-threonine(out) + Na(+)(out). Its function is as follows. Involved in the import of serine and threonine into the cell, with the concomitant import of sodium (symport system). The sequence is that of Serine/threonine transporter SstT from Shewanella denitrificans (strain OS217 / ATCC BAA-1090 / DSM 15013).